We begin with the raw amino-acid sequence, 779 residues long: FAD-dependent monooxygenase BOA8 (779 aa).

Residues E85, R128, D331, and A344 each contribute to the FAD site. 7 helical membrane passes run 471–491 (AQLA…KTPE), 504–524 (VKLD…IWTI), 542–562 (AFLL…YFFF), 587–607 (ILPL…WSSI), 618–638 (NAWY…KFIV), 665–685 (ILIC…SIAF), and 742–762 (LILT…GLIV).

Belongs to the paxM FAD-dependent monooxygenase family. The cofactor is FAD.

It localises to the membrane. Its pathway is polyketide biosynthesis. FAD-dependent monooxygenase; part of the gene cluster B that mediates the biosynthesis of botcinic acid and its botcinin derivatives, acetate-derived polyketides that contribute to virulence when combined with the sesquiterpene botrydial. Botcinic acid and its derivatives have been shown to induce chlorosis and necrosis during host plant infection, but also have antifungal activities. Two polyketide synthases, BOA6 and BOA9, are involved in the biosynthesis of botcinins. BOA6 mediates the formation of the per-methylated tetraketide core by condensation of four units of malonyl-CoA with one unit of acetyl-CoA, which would be methylated in activated methylene groups to yield a bicyclic acid intermediate that could then either be converted to botrylactone derivatives or lose the starter acetate unit through a retro-Claisen type C-C bond cleavage to yield botcinin derivatives. The second polyketide synthase, BOA9, is probably required for the biosynthesis of the tetraketide side chain of botcinins. The methyltransferase (MT) domain within BOA6 is probably responsible for the incorporation of four methyl groups. The trans-enoyl reductase BOA5 might take over the enoyl reductase function of BOA6 that misses an ER domain. The monooxygenases BOA2, BOA3 and BOA4 might be involved in further hydroxylations at C4, C5 and C8, whereas BOA7, close to BOA9, could potentially be involved in the hydroxylation at C4 in the side chain of botcinins. The protein is FAD-dependent monooxygenase BOA8 of Botryotinia fuckeliana (strain B05.10) (Noble rot fungus).